The chain runs to 190 residues: Protein A52 (190 aa).

It belongs to the orthopoxvirus A52R protein family. In terms of assembly, interacts with host TRAF6 and IRAK2.

Its function is as follows. Bcl-2-like protein which targets host toll-like receptor signaling complexes to suppress innate immune response. Interacts with host TRAF6 to activate p38 and subsequently induce the expression of several cytokines such as IL-10. Also associates with host IRAK2 to inhibit NF-kappa-B signaling. The protein is Protein A52 of Vaccinia virus (strain Western Reserve) (VACV).